A 919-amino-acid polypeptide reads, in one-letter code: Chaperone protein ClpC2, chloroplastic (919 aa).

Residues 1–54 (MAGTLLQPVALGTTFAGRVSGQRWKSHGTRRPPSMLAMSLSRPVKMAAFVGLRS) constitute a chloroplast transit peptide. The Clp R domain occupies 89-231 (FERFTEKAIK…RTQVIRMIGE (143 aa)). 2 repeat regions span residues 92–157 (FTEK…IGRG) and 167–231 (FTPR…MIGE). Residues 252-499 (LEEYGTNLTK…RVRLRHAQVP (248 aa)) are i. Position 297–304 (297–304 (GEPGVGKT)) interacts with ATP. The region spanning 506 to 541 (DKELKQITKDKNEAVRSQDFEKAGELRDREMELKAQ) is the UVR domain. An II region spans residues 566–757 (VNEADIQHIV…LLIMTSNVGS (192 aa)). 640 to 647 (GPTGVGKS) serves as a coordination point for ATP.

Belongs to the ClpA/ClpB family. ClpC subfamily.

The protein resides in the plastid. It is found in the chloroplast. Its function is as follows. Molecular chaperone that may interact with a ClpP-like protease involved in degradation of denatured proteins in the chloroplast. The polypeptide is Chaperone protein ClpC2, chloroplastic (CLPC2) (Oryza sativa subsp. japonica (Rice)).